A 1059-amino-acid chain; its full sequence is MAGRLSTADADREIHRFVTREQIDQLHEQFRARNNRLTLDELRELLAELGLFYTEDEYRTLCLQINTDHDRYCQWDELLSYLILGFQDDDPHAVKQSLDPPIAGDLCVKLRRQVYNIVKVDFCPMVYYDGSISWSQGHWITTSREGVIQYWTEDWKPALTARSVPSSLKRSKTWVLDTVPLPDLSMFCVTGLETELRLYNVVAACFTLKLVIERLPQPISAMAYRFGRDEPSRLLTGDYTGHIRMFVFHPERKVTTSGESTVTHVSLQDVLHGAYPPVECVDYGQLLPDIVRAVQFVESVGNVAELFIACAEENPLLSSARGRPRPAMVIHSLDLPAIRRIKFCVPRGVTCFAFEPSNELLVSGGPDCDLRLWDIHRPEKPSVVLVGHTSSITFLFLQDAGEKIYSLDQRKIIKVWDVRNRVLLQTFGQFSTVLVKGVPACAYYNKRARELVVASNKLFVTACCPEIALDRTDGESHTKPVSVLLYNGLYRLVVSCGFDSFIIVWDHRVNRKMTIITEAHTQIRNGVLEPVEITAACFDGKEQMLLTGARNGSLKIWNIGGRTCMRTIQIEEDCEVTGVFWQANRILAMGWNHRVVEFAAFAEQDEYPRGLQWRKQHSDDILCAAVSGSEPGVMATCSYAGELVFWMLETGQPYRRYDATNPRTRLPISFREGRADLMKPRKLTPRRSLFQMPPGQLAHRRLTRILMPSGLEQMRQLSIQALLFLAMRKMLPDRGTLFGSLDNGMVQVWSHHPDGGFKGQFNGIHMAGDRIITLATDKANRFLFTGTALGYVKTWYIENCWIPNEDKFHVNKPALRILFPFLLNDVVPGRAKRSARAQVKPWLLNSYQAHRACVTGLTYLDDTGLLLSCSSDRTVRLWTLGGRYIGLLGSPVNWQPLPMAVPPPADYRFRIPPDLQREVSFTTLKVLRGGKDSSRTARTKSGGGTATVGDIVGVAADRSKHTPMIETYGSPLAEPILNTAVLKLPSKEPMLQTIKLDRTYPSFPLYRHMVAFPVQPLKRTNKTVEENGSDWNELEQLLERTKALQFKDAPSDADAEGTQ.

WD repeat units follow at residues 121 to 161 (DFCP…ALTA), 170 to 209 (RSKTWVLDTVPLPDLSMFCVTGLETELRLYNVVAACFTLK), 214 to 256 (RLPQ…KVTT), 344 to 383 (CVPRGVTCFAFEPSNELLVSGGPDCDLRLWDIHRPEKPSV), 387 to 426 (GHTSSITFLFLQDAGEKIYSLDQRKIIKVWDVRNRVLLQT), 476 to 515 (SHTKPVSVLLYNGLYRLVVSCGFDSFIIVWDHRVNRKMTI), 528 to 567 (LEPVEITAACFDGKEQMLLTGARNGSLKIWNIGGRTCMRT), 616 to 658 (QHSD…RRYD), 714 to 759 (MRQL…GFKG), 766 to 805 (MAGDRIITLATDKANRFLFTGTALGYVKTWYIENCWIPNE), and 849 to 888 (AHRACVTGLTYLDDTGLLLSCSSDRTVRLWTLGGRYIGLL).

This Anopheles gambiae (African malaria mosquito) protein is WD repeat-containing protein on Y chromosome.